We begin with the raw amino-acid sequence, 377 residues long: Early estrogen-induced gene 1 protein (377 aa).

Residues 2–145 (AFLTKKKKFK…ILKVNIGMSL (144 aa)) enclose the C2 NT-type domain. Composition is skewed to polar residues over residues 160–173 (KTVS…SLQM), 188–198 (VRQNRSRQAML), and 222–234 (SRNS…QSKI). Residues 160–313 (KTVSPPGQDS…SVESQPTWVD (154 aa)) are disordered. Positions 256–269 (TSTSSSVSGGLSLT) are enriched in low complexity. Positions 274 to 285 (EPERDVKPEKPP) are enriched in basic and acidic residues.

It belongs to the EEIG family.

It is found in the nucleus. Its subcellular location is the cytoplasm. In terms of biological role, may be involved in osteoclast differentiation. This chain is Early estrogen-induced gene 1 protein (eeig1), found in Xenopus laevis (African clawed frog).